Reading from the N-terminus, the 99-residue chain is Small ribosomal subunit protein bS20 (99 aa).

The protein belongs to the bacterial ribosomal protein bS20 family.

Functionally, binds directly to 16S ribosomal RNA. The polypeptide is Small ribosomal subunit protein bS20 (Picosynechococcus sp. (strain ATCC 27264 / PCC 7002 / PR-6) (Agmenellum quadruplicatum)).